Here is a 312-residue protein sequence, read N- to C-terminus: Ribosomal protein L11 methyltransferase (312 aa).

The S-adenosyl-L-methionine site is built by Thr160, Gly181, Asp203, and Asn246.

Belongs to the methyltransferase superfamily. PrmA family.

Its subcellular location is the cytoplasm. It catalyses the reaction L-lysyl-[protein] + 3 S-adenosyl-L-methionine = N(6),N(6),N(6)-trimethyl-L-lysyl-[protein] + 3 S-adenosyl-L-homocysteine + 3 H(+). Methylates ribosomal protein L11. This is Ribosomal protein L11 methyltransferase from Staphylococcus aureus (strain JH1).